The chain runs to 488 residues: ATP synthase subunit beta (488 aa).

ATP is bound at residue 164–171 (GGAGVGKT).

The protein belongs to the ATPase alpha/beta chains family. As to quaternary structure, F-type ATPases have 2 components, CF(1) - the catalytic core - and CF(0) - the membrane proton channel. CF(1) has five subunits: alpha(3), beta(3), gamma(1), delta(1), epsilon(1). CF(0) has four main subunits: a(1), b(1), b'(1) and c(9-12).

It is found in the cellular thylakoid membrane. The enzyme catalyses ATP + H2O + 4 H(+)(in) = ADP + phosphate + 5 H(+)(out). Its function is as follows. Produces ATP from ADP in the presence of a proton gradient across the membrane. The catalytic sites are hosted primarily by the beta subunits. This is ATP synthase subunit beta from Prochlorococcus marinus (strain MIT 9303).